We begin with the raw amino-acid sequence, 387 residues long: Proline-rich protein 5 (387 aa).

2 interaction with RICTOR regions span residues 10–96 and 189–219; these read MSSP…LTKG and HESR…YGLY. Positions 13–34 are disordered; sequence PSLSDLGKREPGAAGTDERGTQ. Residues 18-33 show a composition bias toward basic and acidic residues; that stretch reads LGKREPGAAGTDERGT. Phosphoserine is present on S253. The interval 262–387 is disordered; sequence NPVAEHEAEG…EAPGGRPSVV (126 aa). Polar residues predominate over residues 305–314; sequence SGTFRSSPTP. A Phosphoserine modification is found at S373.

This sequence belongs to the PROTOR family. As to quaternary structure, associated component of the mechanistic target of rapamycin complex 2 (mTORC2). Binds directly to MTOR and RICTOR within the TORC2 complex. Ubiquitously expressed. Expressed at high levels in kidney.

Associated subunit of mTORC2, which regulates cell growth and survival in response to hormonal signals. mTORC2 is activated by growth factors, but, in contrast to mTORC1, seems to be nutrient-insensitive. mTORC2 seems to function upstream of Rho GTPases to regulate the actin cytoskeleton, probably by activating one or more Rho-type guanine nucleotide exchange factors. PRR5 plays an important role in regulation of PDGFRB expression and in modulation of platelet-derived growth factor signaling. May act as a tumor suppressor in breast cancer. The polypeptide is Proline-rich protein 5 (Mus musculus (Mouse)).